A 225-amino-acid polypeptide reads, in one-letter code: Ras-related protein Rab-21 (225 aa).

Alanine 2 carries the N-acetylalanine modification. GTP contacts are provided by glycine 28, glycine 31, lysine 32, threonine 33, serine 34, asparagine 45, aspartate 46, histidine 48, threonine 50, and threonine 51. Mg(2+) is bound at residue threonine 33. A Switch 1 motif is present at residues 43-56 (KFNDKHITTLQASF). Mg(2+) contacts are provided by threonine 51 and aspartate 74. A Switch 2 motif is present at residues 76-94 (AGQERFHALGPIYYRDSNG). Positions 77, 132, 133, 135, 163, and 164 each coordinate GTP. The tract at residues 188-225 (ERAKGNGSSQPGTARRGVQIIDDEPQAQTSGGGCCSSG) is disordered. 2 S-geranylgeranyl cysteine lipidation sites follow: cysteine 221 and cysteine 222. The residue at position 222 (cysteine 222) is a Cysteine methyl ester. The propeptide at 223 to 225 (SSG) is removed in mature form.

The protein belongs to the small GTPase superfamily. Rab family. Interacts with the cytoplasmic tail of integrins ITGA1, ITGA2, ITGA5, ITGA6, ITGA11 and ITGB1. Interacts with RABGEF1 (via VPS9 domain). Interacts with ANKRD27. Interacts with VAMP7. Interacts (in GTP-bound form) with VAMP8 in response to starvation; the interaction probably regulates VAMP8 endolysosomal trafficking. Interacts (active GTP-bound form) with TMED10; the interaction is indirect and regulates TMED10 abundance and localization at the Golgi. Mg(2+) serves as cofactor. In terms of tissue distribution, widely expressed. In jejunal tissue, predominantly expressed in the apical region of the epithelial cell layer of the villi, weak expression, if any, in the crypt epithelium. Capillary endothelium and some cell types in the lamina propria also show expression.

Its subcellular location is the endoplasmic reticulum membrane. The protein resides in the golgi apparatus. It is found in the trans-Golgi network. It localises to the golgi apparatus membrane. The protein localises to the early endosome membrane. Its subcellular location is the cytoplasmic vesicle membrane. The protein resides in the cleavage furrow. It is found in the cell projection. It localises to the neuron projection. It carries out the reaction GTP + H2O = GDP + phosphate + H(+). Regulated by guanine nucleotide exchange factors (GEFs) including ANKRD27 and RABGEF1, which promote the exchange of bound GDP for free GTP. Regulated by GTPase activating proteins (GAPs) which increase the GTP hydrolysis activity. Inhibited by GDP dissociation inhibitors (GDIs). Its function is as follows. The small GTPases Rab are key regulators of intracellular membrane trafficking, from the formation of transport vesicles to their fusion with membranes. Rabs cycle between an inactive GDP-bound form and an active GTP-bound form that is able to recruit to membranes different sets of downstream effectors directly responsible for vesicle formation, movement, tethering and fusion. RAB21 is involved in membrane trafficking control. During the mitosis of adherent cells, controls the endosomal trafficking of integrins which is required for the successful completion of cytokinesis. Regulates integrin internalization and recycling, but does not influence the traffic of endosomally translocated receptors in general. As a result, may regulate cell adhesion and migration. Involved in neurite growth. Following SBF2/MTMT13-mediated activation in response to starvation-induced autophagy, binds to and regulates SNARE protein VAMP8 endolysosomal transport required for SNARE-mediated autophagosome-lysosome fusion. Modulates protein levels of the cargo receptors TMED2 and TMED10, and required for appropriate Golgi localization of TMED10. This is Ras-related protein Rab-21 from Homo sapiens (Human).